Consider the following 696-residue polypeptide: DNA ligase (696 aa).

Residues 41–45 (DGQYD), 90–91 (SL), and E120 contribute to the NAD(+) site. Residue K122 is the N6-AMP-lysine intermediate of the active site. 4 residues coordinate NAD(+): R143, E180, K296, and K320. The Zn(2+) site is built by C414, C417, C433, and C439. One can recognise a BRCT domain in the interval 603 to 692 (STPRTLEGLT…PDAVARPAEE (90 aa)).

This sequence belongs to the NAD-dependent DNA ligase family. LigA subfamily. Mg(2+) serves as cofactor. Mn(2+) is required as a cofactor.

It catalyses the reaction NAD(+) + (deoxyribonucleotide)n-3'-hydroxyl + 5'-phospho-(deoxyribonucleotide)m = (deoxyribonucleotide)n+m + AMP + beta-nicotinamide D-nucleotide.. Its function is as follows. DNA ligase that catalyzes the formation of phosphodiester linkages between 5'-phosphoryl and 3'-hydroxyl groups in double-stranded DNA using NAD as a coenzyme and as the energy source for the reaction. It is essential for DNA replication and repair of damaged DNA. This Kineococcus radiotolerans (strain ATCC BAA-149 / DSM 14245 / SRS30216) protein is DNA ligase.